The sequence spans 276 residues: Type II pantothenate kinase (276 aa).

ATP is bound at residue 8–15 (DAGGTLTK). The active-site Proton acceptor is the E76. ATP-binding positions include T105, 127–131 (GGTIM), F143, and S230.

Belongs to the type II pantothenate kinase family. Homodimer.

Its subcellular location is the cytoplasm. The catalysed reaction is (R)-pantothenate + ATP = (R)-4'-phosphopantothenate + ADP + H(+). The protein operates within cofactor biosynthesis; coenzyme A biosynthesis; CoA from (R)-pantothenate: step 1/5. Functionally, catalyzes the phosphorylation of pantothenate (Pan), the first step in CoA biosynthesis. In Bacillus cereus (strain ZK / E33L), this protein is Type II pantothenate kinase.